The following is a 129-amino-acid chain: uncharacterized protein (129 aa).

The first 27 residues, 1–27, serve as a signal peptide directing secretion; that stretch reads MLMRKKKLLSRISFGSLFLLCGTILSA. Cysteine 28 is lipidated: N-palmitoyl cysteine. Residue cysteine 28 is the site of S-diacylglycerol cysteine attachment.

Belongs to the MG439/MG440 family.

The protein resides in the cell membrane. This is an uncharacterized protein from Mycoplasma pneumoniae (strain ATCC 29342 / M129 / Subtype 1) (Mycoplasmoides pneumoniae).